Here is a 405-residue protein sequence, read N- to C-terminus: Prostaglandin E2 receptor EP1 subtype (405 aa).

Over 1–39 (MSPCGLNLSLADEAATCATPRLPNTSVVLPTGDNGTSPA) the chain is Extracellular. Asparagine 7, asparagine 24, and asparagine 34 each carry an N-linked (GlcNAc...) asparagine glycan. A helical transmembrane segment spans residues 40 to 62 (LPIFSMTLGAVSNVLALALLAQV). Over 63–80 (AGRMRRRRSAATFLLFVA) the chain is Cytoplasmic. A helical membrane pass occupies residues 81 to 99 (SLLAIDLAGHVIPGALVLR). At 100 to 113 (LYTAGRAPAGGACH) the chain is on the extracellular side. Cysteines 112 and 190 form a disulfide. The chain crosses the membrane as a helical span at residues 114-135 (FLGGCMVFFGLCPLLLGCGMAV). At 136–157 (ERCVGVTQPLIHAARVSVARAR) the chain is on the cytoplasmic side. Residues 158 to 179 (LALAVLAAMALAVALLPLVHVG) traverse the membrane as a helical segment. The Extracellular portion of the chain corresponds to 180 to 202 (RYELQYPGTWCFISLGPRGGWRQ). Residues 203–228 (ALLAGLFAGLGLAALLAALVCNTLSG) traverse the membrane as a helical segment. At 229–301 (LALLRARWRR…HAHDVEMVGQ (73 aa)) the chain is on the cytoplasmic side. The tract at residues 243–287 (RFRKTAGPDDRRRWGSRGPRLASASSASSITSATATLRSSRGGGS) is disordered. A compositionally biased stretch (low complexity) spans 262-282 (RLASASSASSITSATATLRSS). A helical membrane pass occupies residues 302-323 (LVGIMVVSCICWSPLLVLVVLA). At 324–337 (IGGWNSNSLQRPLF) the chain is on the extracellular side. The helical transmembrane segment at 338 to 357 (LAVRLASWNQILDPWVYILL) threads the bilayer. Residues 358-405 (RQAMLRQLLRLLPLRVSAKGGPTELGLTKSAWEASSLRSSRHSGFSHL) are Cytoplasmic-facing.

It belongs to the G-protein coupled receptor 1 family. Post-translationally, phosphorylated. Abundant in kidney and in a lesser amount in lung.

It is found in the cell membrane. In terms of biological role, receptor for prostaglandin E2 (PGE2). The activity of this receptor is mediated by G(q) proteins which activate a phosphatidylinositol-calcium second messenger system. May play a role as an important modulator of renal function. Implicated the smooth muscle contractile response to PGE2 in various tissues. This Mus musculus (Mouse) protein is Prostaglandin E2 receptor EP1 subtype (Ptger1).